The primary structure comprises 243 residues: Outer membrane protein A (243 aa).

The next 5 beta stranded transmembrane spans lie at 1–8, 13–21, 48–57, 62–69, and 88–96; these read LAAKLSYP, LDIYTRLGG, PLAAVGVEYA, WATRLDYQ, and MLSLGVSYR. 5 tandem repeats follow at residues 104 to 105, 106 to 107, 108 to 109, 110 to 111, and 112 to 113. A 5 X 2 AA tandem repeats of A-P region spans residues 104-113; that stretch reads APAPAPAPAP. In terms of domain architecture, OmpA-like spans 115 to 243; it reads VETKLFTLKS…RRVEIEVKGI (129 aa). Cys-215 and Cys-229 are disulfide-bonded.

Belongs to the outer membrane OOP (TC 1.B.6) superfamily. OmpA family. As to quaternary structure, monomer and homodimer.

It localises to the cell outer membrane. In terms of biological role, with TolR probably plays a role in maintaining the position of the peptidoglycan cell wall in the periplasm. Acts as a porin with low permeability that allows slow penetration of small solutes; an internal gate slows down solute passage. This Serratia odorifera protein is Outer membrane protein A.